The primary structure comprises 346 residues: KH domain-containing, RNA-binding, signal transduction-associated protein 3 (346 aa).

The tract at residues M1–N160 is involved in homodimerization. A Glycyl lysine isopeptide (Lys-Gly) (interchain with G-Cter in SUMO2) cross-link involves residue K4. Residues L61–L127 form the KH domain. 2 disordered regions span residues R212–Y266 and G317–Y346. Over residues G253 to T262 the composition is skewed to pro residues.

It belongs to the KHDRBS family. Self-associates to form homooligomers; dimerization increases RNA affinity. Interacts with KHDRBS2/SLM-1. Interacts with KHDRBS1/SAM68; heterooligomer formation of KHDRBS family proteins may modulate RNA substrate specificity. Interacts with the splicing regulatory proteins SFRS9, SAFB and YTHDC1. Interacts with HNRPL, RBMX, p85 subunit of PI3-kinase, SERPINB5. In terms of processing, phosphorylated on tyrosine residues by PTK6. Highly expressed in testis and brain. In adult cerebellum expressed predominantly in internal granular layer interneurons and in hippocampus is exclusively expressed in CA neurons; expression is restricted to neuronal subpopulations largely non-overlapping with expression of KHDRBS2/SLM-1.

The protein localises to the nucleus. Its function is as follows. RNA-binding protein that plays a role in the regulation of alternative splicing and influences mRNA splice site selection and exon inclusion. Binds preferentially to the 5'-[AU]UAAA-3' motif in vitro. Binds optimally to RNA containing 5'-[AU]UAA-3' as a bipartite motif spaced by more than 15 nucleotides. Binds poly(A). RNA-binding abilities are down-regulated by tyrosine kinase PTK6. Involved in splice site selection of vascular endothelial growth factor. In vitro regulates CD44 alternative splicing by direct binding to purine-rich exonic enhancer. Can regulate alternative splicing of neurexins NRXN1-3 in the laminin G-like domain 6 containing the evolutionary conserved neurexin alternative spliced segment 4 (AS4) involved in neurexin selective targeting to postsynaptic partners such as neuroligins and LRRTM family members. High concentrations in forebrain structures block splicing inclusion of NRXN1-3 AS4 exons while low concentrations favor their inclusion. Targeted, cell-type specific splicing regulation of NRXN1 at AS4 is involved in neuronal glutamatergic synapse function and plasticity and is linked to behavioral aspects. Regulates expression of KHDRBS2/SLIM-1 in defined neuron populations in the hippocampus by modifying its alternative splicing resulting in a transcript predicted to undergo nonsense-mediated decay. Can bind FABP9 mRNA. May play a role as a negative regulator of cell growth. Inhibits cell proliferation. This is KH domain-containing, RNA-binding, signal transduction-associated protein 3 (Khdrbs3) from Mus musculus (Mouse).